We begin with the raw amino-acid sequence, 208 residues long: Outer-membrane lipoprotein carrier protein (208 aa).

Residues 1-22 (MKNLLCAVMLTSPLLYSTAVFA) form the signal peptide.

The protein belongs to the LolA family. As to quaternary structure, monomer.

Its subcellular location is the periplasm. Functionally, participates in the translocation of lipoproteins from the inner membrane to the outer membrane. Only forms a complex with a lipoprotein if the residue after the N-terminal Cys is not an aspartate (The Asp acts as a targeting signal to indicate that the lipoprotein should stay in the inner membrane). The chain is Outer-membrane lipoprotein carrier protein from Shewanella sp. (strain W3-18-1).